We begin with the raw amino-acid sequence, 288 residues long: ATP synthase gamma chain (288 aa).

The protein belongs to the ATPase gamma chain family. In terms of assembly, F-type ATPases have 2 components, CF(1) - the catalytic core - and CF(0) - the membrane proton channel. CF(1) has five subunits: alpha(3), beta(3), gamma(1), delta(1), epsilon(1). CF(0) has three main subunits: a, b and c.

The protein resides in the cell inner membrane. In terms of biological role, produces ATP from ADP in the presence of a proton gradient across the membrane. The gamma chain is believed to be important in regulating ATPase activity and the flow of protons through the CF(0) complex. This is ATP synthase gamma chain from Actinobacillus pleuropneumoniae serotype 5b (strain L20).